A 260-amino-acid polypeptide reads, in one-letter code: tRNA pseudouridine synthase A (260 aa).

Catalysis depends on Asp-51, which acts as the Nucleophile. Substrate is bound at residue Tyr-109.

The protein belongs to the tRNA pseudouridine synthase TruA family. As to quaternary structure, homodimer.

It catalyses the reaction uridine(38/39/40) in tRNA = pseudouridine(38/39/40) in tRNA. Its function is as follows. Formation of pseudouridine at positions 38, 39 and 40 in the anticodon stem and loop of transfer RNAs. The polypeptide is tRNA pseudouridine synthase A (Albidiferax ferrireducens (strain ATCC BAA-621 / DSM 15236 / T118) (Rhodoferax ferrireducens)).